An 83-amino-acid chain; its full sequence is MPAIEVGRIAVVIAGRRAGQKVVVADIIDKNFVLVTGAGLNKVKRRRMNVKHLEPLPERVNIERGASDEEIKKALEEAGISLE.

The protein belongs to the eukaryotic ribosomal protein eL14 family.

This chain is Large ribosomal subunit protein eL14, found in Thermococcus gammatolerans (strain DSM 15229 / JCM 11827 / EJ3).